Here is a 123-residue protein sequence, read N- to C-terminus: UPF0102 protein CLJ_B2665 (123 aa).

Belongs to the UPF0102 family.

This is UPF0102 protein CLJ_B2665 from Clostridium botulinum (strain 657 / Type Ba4).